The sequence spans 130 residues: Small ribosomal subunit protein uS9 (130 aa).

The protein belongs to the universal ribosomal protein uS9 family.

The polypeptide is Small ribosomal subunit protein uS9 (Desulfovibrio desulfuricans (strain ATCC 27774 / DSM 6949 / MB)).